A 689-amino-acid chain; its full sequence is Glycine--tRNA ligase beta subunit (689 aa).

Belongs to the class-II aminoacyl-tRNA synthetase family. As to quaternary structure, tetramer of two alpha and two beta subunits.

The protein localises to the cytoplasm. The catalysed reaction is tRNA(Gly) + glycine + ATP = glycyl-tRNA(Gly) + AMP + diphosphate. This is Glycine--tRNA ligase beta subunit from Salmonella schwarzengrund (strain CVM19633).